A 371-amino-acid polypeptide reads, in one-letter code: Gamma-tocopherol methyltransferase, chloroplastic (371 aa).

The N-terminal 65 residues, Met-1–Gln-65, are a transit peptide targeting the chloroplast. The tract at residues Ile-153 to Gly-162 is SAM motif I. The segment at Gly-216 to Met-224 is SAM motif II. The SAM motif III stretch occupies residues Val-243 to Ile-252.

The protein belongs to the class I-like SAM-binding methyltransferase superfamily. gTMT family. As to quaternary structure, homodimer.

It localises to the plastid. The protein resides in the chloroplast inner membrane. It catalyses the reaction picrinine + S-adenosyl-L-methionine = ervincine + S-adenosyl-L-homocysteine + H(+). It functions in the pathway alkaloid biosynthesis; vindoline biosynthesis. S-adenosyl-L-methionine-dependent N-methyltransferase involved in the biosynthesis of biologically active monoterpenoid indole alkaloids (MIAs) natural products including vindoline. Inactive with picrinine as substrate. The polypeptide is Gamma-tocopherol methyltransferase, chloroplastic (Catharanthus roseus (Madagascar periwinkle)).